A 622-amino-acid polypeptide reads, in one-letter code: Pesticidal crystal protein Cry2Ac (622 aa).

This sequence belongs to the delta endotoxin family.

Functionally, promotes colloidosmotic lysis by binding to the midgut epithelial cells of lepidopteran larvae. Has low activity on dipteran larvae. The sequence is that of Pesticidal crystal protein Cry2Ac (cry2Ac) from Bacillus thuringiensis.